The chain runs to 252 residues: 5'-nucleotidase SurE (252 aa).

Residues Asp8, Asp9, Ser39, and Asn91 each coordinate a divalent metal cation.

It belongs to the SurE nucleotidase family. A divalent metal cation is required as a cofactor.

Its subcellular location is the cytoplasm. It carries out the reaction a ribonucleoside 5'-phosphate + H2O = a ribonucleoside + phosphate. Its function is as follows. Nucleotidase that shows phosphatase activity on nucleoside 5'-monophosphates. The polypeptide is 5'-nucleotidase SurE (Bordetella pertussis (strain Tohama I / ATCC BAA-589 / NCTC 13251)).